The primary structure comprises 320 residues: Transmembrane protein 41 homolog (320 aa).

A disordered region spans residues 20-72 (GRAKALQEHSPDQVATPLLPQVPPQEQQDLNPQQQQQQQQQQQATPQKQAMSA). Over residues 43 to 68 (PQEQQDLNPQQQQQQQQQQQATPQKQ) the composition is skewed to low complexity. A run of 6 helical transmembrane segments spans residues 83 to 103 (VIVA…YAIF), 141 to 161 (VMFG…PGSL), 173 to 195 (FPIA…YTLS), 225 to 242 (LFNY…PNWF), 245 to 265 (LASP…FCGV), and 289 to 309 (FSWT…LPGL).

Belongs to the TMEM41 family. In embryos, strongly expressed in the nervous system.

The protein resides in the membrane. In terms of biological role, required in cholinergic neurons, but not in motor neurons, for normal neurotransmitter release by motor neurons. Involved in muscle growth. This chain is Transmembrane protein 41 homolog (stas), found in Drosophila melanogaster (Fruit fly).